The sequence spans 386 residues: Threonine--tRNA ligase editing subunit (386 aa).

Belongs to the class-II aminoacyl-tRNA synthetase family. Archaea-specific ThrRS editing domain subfamily. Probably interacts with its catalytic subunit (AC Q97VW8); a subunit fusion (in the order edit-catalytic) is fully functional.

The protein localises to the cytoplasm. Its function is as follows. Freestanding tRNA editing subunit of threonine--tRNA ligase, the catalytic subunit is AC Q97VW8. Deacylates (edits) mischarged L-seryl-tRNA(Thr) in trans, removing L-serine, has no aminoacylation activity. In vitro when both subunits are present, or if the 2 subunits are fused, L-seryl-tRNA(Thr) is no longer produced. Has no activity on correctly acylated L-seryl-tRNA(Ser) or L-threonyl-tRNA(Thr). Editing is probably catalyzed by the 2'-OH of A76 of tRNA(Thr). The polypeptide is Threonine--tRNA ligase editing subunit (Saccharolobus solfataricus (strain ATCC 35092 / DSM 1617 / JCM 11322 / P2) (Sulfolobus solfataricus)).